We begin with the raw amino-acid sequence, 143 residues long: Transcriptional regulator MraZ (143 aa).

2 SpoVT-AbrB domains span residues 5–47 (EYHH…SMEE) and 76–119 (AMES…AKER).

The protein belongs to the MraZ family. As to quaternary structure, forms oligomers.

The protein localises to the cytoplasm. It localises to the nucleoid. The chain is Transcriptional regulator MraZ from Lactobacillus helveticus (strain DPC 4571).